Reading from the N-terminus, the 416-residue chain is E3 ubiquitin-protein ligase makorin-2 (416 aa).

C3H1-type zinc fingers lie at residues 2-29 (STKQ…HDLA) and 31-58 (SKPS…HTKP). The disordered stretch occupies residues 61 to 144 (AAGGAVGPAP…DPQTSPEMKP (84 aa)). A compositionally biased stretch (basic and acidic residues) spans 95–123 (HSNEPGKREKKTLVLRDRNLTGLAEDKTP). The residue at position 139 (Ser-139) is a Phosphoserine. The C3H1-type 3 zinc finger occupies 165-192 (SNEPQLCPYAAAGECRFGDACVYLHGDM). The makorin-type Cys-His stretch occupies residues 193–222 (CEICRLQVLHPFDPEQRKAHEKMCMSTFEH). The segment at 238–292 (CSICMEVILEKASASERRFGILSNCSHTYCLSCIRQWRCAKQFENPIIKSCPECR) adopts an RING-type zinc-finger fold. The C3H1-type 4 zinc-finger motif lies at 321–350 (GMGKKACKYFEQGKGTCPFGSKCLYRHAYP).

In terms of assembly, interacts with PDLIM2 (via LIM zinc-binding domain). Interacts with RELA. In terms of tissue distribution, highly expressed in the testis, and lower expression in the brain, thymus, heart, lung, liver, spleen, kidney, ovary, uterus, and seminal vesicle (at protein level). Expressed in primary immune cells, such as CD4-positive and CD8-positive T cells, CD19-positive B cells and CD11c-positive dendritic cells, and in embryonic fibroblasts (at protein level).

Its subcellular location is the cytoplasm. The protein localises to the nucleus. It carries out the reaction S-ubiquitinyl-[E2 ubiquitin-conjugating enzyme]-L-cysteine + [acceptor protein]-L-lysine = [E2 ubiquitin-conjugating enzyme]-L-cysteine + N(6)-ubiquitinyl-[acceptor protein]-L-lysine.. It functions in the pathway protein modification; protein ubiquitination. In terms of biological role, E3 ubiquitin ligase catalyzing the covalent attachment of ubiquitin moieties onto substrate proteins. Promotes the polyubiquitination and proteasome-dependent degradation of RELA/p65, thereby suppressing RELA-mediated NF-kappa-B transactivation and negatively regulating inflammatory responses. Plays a role in the regulation of spermiation and in male fertility. The chain is E3 ubiquitin-protein ligase makorin-2 (Mkrn2) from Mus musculus (Mouse).